The sequence spans 181 residues: MALKDLFERDVQELEREGILFTTLEKLVAWGRSNSLWPATFGLACCAIEMMASTDARNDLARFGSEVFRASPRQADVMIVAGRLSKKMAPVMRRVWEQMPDPKWVISMGACASSGGMFNNYAIVQNVDSVVPVDVYVPGCPPRPEALIYAVMQLQKKVRGQAYNERGERLPPVAAWKRTRG.

Residues cysteine 45, cysteine 46, cysteine 111, and cysteine 140 each contribute to the [4Fe-4S] cluster site.

It belongs to the complex I 20 kDa subunit family. As to quaternary structure, NDH-1 is composed of 14 different subunits. Subunits NuoB, C, D, E, F, and G constitute the peripheral sector of the complex. [4Fe-4S] cluster serves as cofactor.

Its subcellular location is the cell inner membrane. It carries out the reaction a quinone + NADH + 5 H(+)(in) = a quinol + NAD(+) + 4 H(+)(out). Functionally, NDH-1 shuttles electrons from NADH, via FMN and iron-sulfur (Fe-S) centers, to quinones in the respiratory chain. The immediate electron acceptor for the enzyme in this species is believed to be ubiquinone. Couples the redox reaction to proton translocation (for every two electrons transferred, four hydrogen ions are translocated across the cytoplasmic membrane), and thus conserves the redox energy in a proton gradient. This is NADH-quinone oxidoreductase subunit B (nuoB) from Thermus thermophilus (strain ATCC BAA-163 / DSM 7039 / HB27).